Reading from the N-terminus, the 63-residue chain is MARYRRHSRSRSRSRYRRRRRRRSRHHNRRRTYRRSRRHSRRRRRRRRGYSRRRYSRRGRRRY.

The interval Met-1–Tyr-63 is disordered.

This sequence belongs to the protamine P1 family. In terms of tissue distribution, testis.

The protein localises to the nucleus. It is found in the chromosome. Its function is as follows. Protamines substitute for histones in the chromatin of sperm during the haploid phase of spermatogenesis. They compact sperm DNA into a highly condensed, stable and inactive complex. This Sminthopsis griseoventer (Gray-bellied dunnart) protein is Sperm protamine P1 (PRM1).